Here is a 279-residue protein sequence, read N- to C-terminus: Methyltransferase prhM (279 aa).

Residues 124–125 (DI) and 152–153 (DV) each bind S-adenosyl-L-methionine.

This sequence belongs to the class I-like SAM-binding methyltransferase superfamily.

The protein operates within secondary metabolite biosynthesis; terpenoid biosynthesis. Functionally, methyltransferase; part of the gene cluster that mediates the biosynthesis of paraherquonin, a meroterpenoid with a unique, highly congested hexacyclic molecular architecture. The first step of the pathway is the synthesis of 3,5-dimethylorsellinic acid (DMOA) by the polyketide synthase prhL. Synthesis of DMOA is followed by farnesylation by the prenyltransferase prhE, methylesterification by the methyl-transferase prhM, epoxidation of the prenyl chain by the flavin-dependent monooxygenase prhF, and cyclization of the farnesyl moiety by the terpene cyclase prhH, to yield the tetracyclic intermediate, protoaustinoid A. The short chain dehydrogenase prhI then oxidizes the C-3 alcohol group of the terpene cyclase product to transform protoaustinoid A into protoaustinoid B. The FAD-binding monooxygenase prhJ catalyzes the oxidation of protoaustinoid B into preaustinoid A which is further oxidized into preaustinoid A1 by FAD-binding monooxygenase phrK. Finally, prhA leads to berkeleydione via the berkeleyone B intermediate. PrhA is a multifunctional dioxygenase that first desaturates at C5-C6 to form berkeleyone B, followed by rearrangement of the A/B-ring to form the cycloheptadiene moiety in berkeleydione. Berkeleydione serves as the key intermediate for the biosynthesis of paraherquonin as well as many other meroterpenoids. The cytochrome P450 monooxygenases prhB, prhD, and prhN, as well as the isomerase prhC, are probably involved in the late stage of paraherquonin biosynthesis, after the production of berkeleydione. Especially prhC might be a multifunctional enzyme that catalyzes the D-ring expansion via intramolecular methoxy rearrangement, as well as the hydrolysis of the expanded D-ring. The protein is Methyltransferase prhM of Penicillium brasilianum.